Reading from the N-terminus, the 199-residue chain is Recombination protein RecR (199 aa).

Residues 56-71 (CQVCFHLSAESTCEIC) form a C4-type zinc finger. Residues 79–173 (QTLCVVADSR…KVTRIAFGLP (95 aa)) enclose the Toprim domain.

Belongs to the RecR family.

Its function is as follows. May play a role in DNA repair. It seems to be involved in an RecBC-independent recombinational process of DNA repair. It may act with RecF and RecO. In Gloeothece citriformis (strain PCC 7424) (Cyanothece sp. (strain PCC 7424)), this protein is Recombination protein RecR.